The primary structure comprises 895 residues: Transcription factor SWI6 (895 aa).

Residues 1 to 45 show a composition bias toward polar residues; it reads MASTVAGNSFVSQQHPGNLHSANLQSQSQGFRRQNSTSSVPSTAS. The segment at 1–107 is disordered; sequence MASTVAGNSF…SDQNVPQQPQ (107 aa). The span at 64-100 shows a compositional bias: low complexity; sequence MSSQQSQPPASQQSFSMSQTGSQPQPSQSSFRSYSDQ. The 108-residue stretch at 112-219 folds into the HTH APSES-type domain; that stretch reads IYTAVYSNVE…NRNPDGSVSQ (108 aa). The H-T-H motif DNA-binding region spans 143-164; it reads ATQILKVAGVEKGKRTKILEKE. Disordered regions lie at residues 272–293 and 323–358; these read ARFDSPGPRGRNGPTRAPSFQR and NMAFSAGSEPQPGGLNGTEPPRKRQRMDMTPANSFG. ANK repeat units follow at residues 458-488 and 607-636; these read QCHTALHWAATLSRMTILRRLIEAGASPFRV and AGDTALNIAARIGNRSIISQLLEVCASPHI. The interval 653 to 684 is disordered; that stretch reads SDGAMKTKGDSGGDVENGDVGGSSQKSNESSN. The segment covering 674–684 has biased composition (polar residues); it reads GSSQKSNESSN. Residues 698 to 759 are a coiled coil; it reads SANFQEEIKN…VTNLQRAEER (62 aa).

It localises to the nucleus. Its function is as follows. Transcription factor that plays a role downstream of the MCK1-MKK2-MPS1 cascade. Required for hyphal morphogenesis and pathogenicity. Is an important oxidative stress response regulator and plays a positive role in the regulation of extracellular peroxidases. This is Transcription factor SWI6 from Pyricularia oryzae (strain 70-15 / ATCC MYA-4617 / FGSC 8958) (Rice blast fungus).